Consider the following 3135-residue polypeptide: Gametocyte surface protein P230 (3135 aa).

A signal peptide spans 1–20; that stretch reads MKKIITLKNLFLIILVYIFS. Asparagine 76, asparagine 111, asparagine 135, and asparagine 239 each carry an N-linked (GlcNAc...) asparagine glycan. Positions 266-470 are disordered; that stretch reads EEDMSPRDNF…EEKDEGGESF (205 aa). Acidic residues-rich tracts occupy residues 276-321 and 329-345; these read VIDD…EEQL and VGAESSEESFNDEDEDS. Basic and acidic residues predominate over residues 346–358; the sequence is VEARDGDMIRVDE. Acidic residues-rich tracts occupy residues 376-444 and 458-467; these read DVDE…EGEY and GDEEEKDEGG. N-linked (GlcNAc...) asparagine glycosylation is present at asparagine 585. 2 6-Cys domains span residues 589–730 and 733–887; these read KEYV…VEPY and KING…INEE. Cystine bridges form between cysteine 593–cysteine 611, cysteine 626–cysteine 706, cysteine 737–cysteine 781, and cysteine 804–cysteine 862. Residues asparagine 821, asparagine 829, asparagine 889, asparagine 961, asparagine 1079, asparagine 1089, and asparagine 1153 are each glycosylated (N-linked (GlcNAc...) asparagine). 6-Cys domains are found at residues 918 to 1133, 1136 to 1275, 1285 to 1432, and 1435 to 1560; these read HDYT…ISKQ, KIKG…LKRE, KIYK…VSKR, and KVKG…YKKL. 3 disulfide bridges follow: cysteine 1140–cysteine 1161, cysteine 1175–cysteine 1251, and cysteine 1200–cysteine 1249. N-linked (GlcNAc...) asparagine glycans are attached at residues asparagine 1267, asparagine 1300, asparagine 1452, asparagine 1492, asparagine 1508, asparagine 1621, and asparagine 1624. 3 disulfide bridges follow: cysteine 1439/cysteine 1459, cysteine 1473/cysteine 1534, and cysteine 1483/cysteine 1532. 6-Cys domains lie at 1694 to 1907, 1910 to 2035, 2052 to 2199, and 2204 to 2374; these read NRHV…ISNS, KING…LNKD, NVHL…VRKN, and SFKL…SDNR. 2 cysteine pairs are disulfide-bonded: cysteine 1698–cysteine 1726 and cysteine 1740–cysteine 1881. Residues asparagine 1753, asparagine 1804, asparagine 1882, asparagine 1920, asparagine 1954, and asparagine 1972 are each glycosylated (N-linked (GlcNAc...) asparagine). 4 disulfide bridges follow: cysteine 1914-cysteine 1938, cysteine 1952-cysteine 2017, cysteine 1963-cysteine 2015, and cysteine 2056-cysteine 2074. N-linked (GlcNAc...) asparagine glycosylation is found at asparagine 2178 and asparagine 2199. Intrachain disulfides connect cysteine 2208-cysteine 2229, cysteine 2243-cysteine 2356, and cysteine 2254-cysteine 2354. N-linked (GlcNAc...) asparagine glycosylation is found at asparagine 2312 and asparagine 2351. The segment at 2410 to 2432 is disordered; sequence IKQQQEEEQQEQILKDQDDRLSR. A compositionally biased stretch (basic and acidic residues) spans 2422 to 2432; the sequence is ILKDQDDRLSR. Residues asparagine 2439, asparagine 2457, asparagine 2466, asparagine 2504, asparagine 2586, asparagine 2611, asparagine 2650, asparagine 2677, and asparagine 2688 are each glycosylated (N-linked (GlcNAc...) asparagine). 6-Cys domains lie at 2448 to 2663, 2666 to 2827, 2831 to 2979, and 2982 to 3113; these read NEHI…ISSN, IIHG…IDEK, GKDI…INQG, and EIHG…PEPQ. 2 disulfides stabilise this stretch: cysteine 2452/cysteine 2476 and cysteine 2490/cysteine 2638. Intrachain disulfides connect cysteine 2670/cysteine 2706, cysteine 2720/cysteine 2804, and cysteine 2730/cysteine 2802. A glycan (N-linked (GlcNAc...) asparagine) is linked at asparagine 2952. Cysteine 2986 and cysteine 3010 are joined by a disulfide. N-linked (GlcNAc...) asparagine glycosylation is found at asparagine 3011, asparagine 3016, asparagine 3066, asparagine 3093, and asparagine 3096. Intrachain disulfides connect cysteine 3024/cysteine 3090 and cysteine 3035/cysteine 3088.

As to quaternary structure, heterodimer; heterodimerizes with PF45/48. In terms of processing, may be processed into a 310 kDa form as the parasite emerges from the host erythrocytes.

It localises to the cell surface. The protein localises to the cell membrane. Its function is as follows. Gametocyte surface protein required for male/female gamete fusion. Also required for male gamete exflagellation and interaction with host erythrocytes. The polypeptide is Gametocyte surface protein P230 (PFS230) (Plasmodium falciparum (isolate 3D7)).